The primary structure comprises 2321 residues: Major viral transcription factor ICP4 homolog (2321 aa).

Disordered regions lie at residues 19–183, 296–329, 350–438, 954–1180, 1360–1392, 1597–1841, and 2277–2321; these read GIFP…SPPL, ILHT…PAPI, EFIQ…PSLG, MDDD…SGLA, DNSS…APPH, LLND…PSCY, and QHEE…TFTD. Positions 114-147 are enriched in low complexity; the sequence is SSNRPGGRNSSNGADESGESSSDRSPSYSPCDSY. Pro residues-rich tracts occupy residues 302 to 329 and 355 to 367; these read PTPP…PAPI and QSPP…PSPP. The span at 368–389 shows a compositional bias: low complexity; that stretch reads AHSSSSCSPSHLAPSPLSSSPL. Positions 390-410 are enriched in pro residues; that stretch reads SSPPQLSPAPVSPPSSPPPLS. Composition is skewed to polar residues over residues 424–433 and 1002–1011; these read SISSQPQSCP and PRLTTPSSGR. Residues 1031–1093 show a composition bias toward low complexity; it reads PETSPSNEHI…PSSPSSSRSP (63 aa). Residues 1151–1161 show a composition bias toward basic residues; the sequence is GGGRPRGRPPK. Composition is skewed to polar residues over residues 1169-1180 and 1371-1389; these read NDIQVTSSSGLA and SKPS…QTTA. Over residues 1630–1644 the composition is skewed to low complexity; the sequence is STSSSQSASDKSPIK. 2 stretches are compositionally biased toward polar residues: residues 1720–1743 and 1801–1816; these read KAQT…QSSS and VGQT…HDIL. A compositionally biased stretch (low complexity) spans 1817–1839; the sequence is SSSLPNRSCSSSPSPSKRPYHPS.

Belongs to the herpesviridae ICP4 family. In terms of processing, a long stretch of serine residues may be a major site of phosphorylation.

It localises to the host nucleus. This IE protein is a multifunctional protein capable of migrating to the nucleus, binding to DNA, trans-activating other viral genes, and autoregulating its own synthesis. It is required for the switch from immediate-early to early mode of gene expression. This Gallus gallus (Chicken) protein is Major viral transcription factor ICP4 homolog (MDV084).